The following is a 256-amino-acid chain: Imidazole glycerol phosphate synthase subunit HisF (256 aa).

Active-site residues include D12 and D131.

This sequence belongs to the HisA/HisF family. As to quaternary structure, heterodimer of HisH and HisF.

Its subcellular location is the cytoplasm. It catalyses the reaction 5-[(5-phospho-1-deoxy-D-ribulos-1-ylimino)methylamino]-1-(5-phospho-beta-D-ribosyl)imidazole-4-carboxamide + L-glutamine = D-erythro-1-(imidazol-4-yl)glycerol 3-phosphate + 5-amino-1-(5-phospho-beta-D-ribosyl)imidazole-4-carboxamide + L-glutamate + H(+). It participates in amino-acid biosynthesis; L-histidine biosynthesis; L-histidine from 5-phospho-alpha-D-ribose 1-diphosphate: step 5/9. Functionally, IGPS catalyzes the conversion of PRFAR and glutamine to IGP, AICAR and glutamate. The HisF subunit catalyzes the cyclization activity that produces IGP and AICAR from PRFAR using the ammonia provided by the HisH subunit. The polypeptide is Imidazole glycerol phosphate synthase subunit HisF (Pseudomonas fluorescens (strain Pf0-1)).